The chain runs to 548 residues: Probable inorganic phosphate transporter 1-5 (548 aa).

Over 1 to 23 the chain is Cytoplasmic; the sequence is MVQDRKVLDALDTAKTQWYHFTA. Residues 24-44 form a helical membrane-spanning segment; it reads VVIAGMGFFTDAYDLFSISLV. Residues 45–69 lie on the Extracellular side of the membrane; that stretch reads TKLLGRIYYFNPASKSPGSLPPNVS. Residues 70–90 traverse the membrane as a helical segment; that stretch reads AAVNGVAFCGTLAGQLFFGWL. At 91-98 the chain is on the cytoplasmic side; the sequence is GDKMGRKK. A helical membrane pass occupies residues 99 to 119; the sequence is VYGMTLMLMVICCLASGLSFG. Over 120–123 the chain is Extracellular; sequence SSAK. A helical membrane pass occupies residues 124–144; it reads GVMATLCFFRFWLGFGIGGDY. The Cytoplasmic segment spans residues 145-163; sequence PLSATIMSEYANKRTRGAF. Residues 164–184 traverse the membrane as a helical segment; sequence IAAVFAMQGFGNLTGGIVAII. At 185–210 the chain is on the extracellular side; the sequence is VSAAFKLRFDAPAYRDDRAGSTVPQA. The helical transmembrane segment at 211 to 231 threads the bilayer; sequence DYAWRIVLMFGAIPALLTYYW. Topologically, residues 232 to 303 are cytoplasmic; it reads RMKMPETARY…REFARRHGHH (72 aa). The chain crosses the membrane as a helical span at residues 304-324; that stretch reads LLGTTVCWFVLDIAYYSQNLF. The Extracellular portion of the chain corresponds to 325–355; that stretch reads QKDIYTAVQWLPKADTMSALEEMFKISRAQT. The helical transmembrane segment at 356 to 376 threads the bilayer; the sequence is LVALCGTIPGYWFTVLFIDIV. The Cytoplasmic segment spans residues 377–378; that stretch reads GR. The helical transmembrane segment at 379 to 399 threads the bilayer; it reads FAIQLGGFFLMTAFMLGLAVP. The Extracellular portion of the chain corresponds to 400–405; it reads YHHWTT. Residues 406 to 426 traverse the membrane as a helical segment; that stretch reads PGNHVGFVVMYAFTFFFANFG. The Cytoplasmic portion of the chain corresponds to 427–449; that stretch reads PNSTTFIVPAEIFPARLRSTCHG. A helical transmembrane segment spans residues 450 to 470; the sequence is ISSAAGKMGAIVGSFGFLYAA. Residues 471 to 490 are Extracellular-facing; it reads QSTDPSKTDAGYPRGIGVRN. A helical membrane pass occupies residues 491 to 511; that stretch reads SLFLLAGCNVVGFLFTFLVPE. Residues 512–548 lie on the Cytoplasmic side of the membrane; it reads SKGKSLEELSGENEMEAEPAAATNSYRQTVPDSGQSE. Residues 518–548 are disordered; sequence EELSGENEMEAEPAAATNSYRQTVPDSGQSE. The span at 533–548 shows a compositional bias: polar residues; the sequence is ATNSYRQTVPDSGQSE.

This sequence belongs to the major facilitator superfamily. Phosphate:H(+) symporter (TC 2.A.1.9) family. As to expression, expressed at low levels in roots.

It localises to the membrane. High-affinity transporter for external inorganic phosphate. The polypeptide is Probable inorganic phosphate transporter 1-5 (PHT1-5) (Oryza sativa subsp. japonica (Rice)).